The primary structure comprises 488 residues: HSPB1-associated protein 1 (488 aa).

The interval 88 to 208 is interaction with HSPB1; sequence ETTCNYVEAT…EDTPFLYPTR (121 aa). A JmjC domain is found at 124 to 288; sequence WAYADYKYFV…HLARVEEAIT (165 aa). The segment covering 369–379 has biased composition (polar residues); it reads QTGSQNLTTGT. The interval 369-415 is disordered; it reads QTGSQNLTTGTDKPEAASPFGPDLVPVAQRSEEPPSERGGIFGSDGK.

In terms of assembly, interacts with CRYAB and HSPB1. As to expression, widely expressed.

Its subcellular location is the cytoplasm. Functionally, may play a role in cellular stress response. The polypeptide is HSPB1-associated protein 1 (HSPBAP1) (Homo sapiens (Human)).